The following is a 791-amino-acid chain: Interleukin-17 receptor C (791 aa).

Residues methionine 1–serine 20 form the signal peptide. The Extracellular segment spans residues leucine 21–arginine 538. 2 N-linked (GlcNAc...) asparagine glycosylation sites follow: asparagine 189 and asparagine 257. A disulfide bridge connects residues cysteine 265 and cysteine 277. N-linked (GlcNAc...) asparagine glycans are attached at residues asparagine 284, asparagine 297, asparagine 324, and asparagine 334. 3 disulfide bridges follow: cysteine 341-cysteine 391, cysteine 343-cysteine 359, and cysteine 400-cysteine 409. Residues asparagine 420, asparagine 443, and asparagine 477 are each glycosylated (N-linked (GlcNAc...) asparagine). Cysteine 439 and cysteine 453 form a disulfide bridge. Disulfide bonds link cysteine 481–cysteine 488 and cysteine 515–cysteine 529. A helical transmembrane segment spans residues tryptophan 539–leucine 559. Residues lysine 560–threonine 791 lie on the Cytoplasmic side of the membrane. Positions glycine 583–glycine 735 constitute an SEFIR domain. Residues alanine 762–threonine 791 are disordered. Gly residues predominate over residues arginine 777–threonine 791.

As to quaternary structure, homodimer; disulfide-linked. Heterodimer with IL17RA. Heterodimerization with IL17RA is independent of the cytoplasmic tail. Associates with non-glycosylated IL17RA constitutively. Binding of IL17A and IL17F induces association with glycosylated IL17RA. Forms complexes with 2:1 binding stoichiometry: two receptor chains for one interleukin molecule. IL17A homodimer preferentially drives the formation of IL17RA-IL17RC heterodimeric receptor complex, whereas IL17F homodimer forms predominantly complexes with IL17RC homodimer. IL17A-IL17F forms complexes with IL17RA-IL17RC, but with lower affinity when compared to IL17A homodimer. IL17RC chain cannot distinguish between IL17A and IL17F molecules, potentially enabling the formation of topologically distinct complexes. Interacts (through SEFIR domain and extended downstream region) with TRAF3IP2/ACT1 (phosphorylated). Expressed in prostate, skeletal muscle, kidney and placenta (at protein level). Expressed in brain, cartilage, colon, heart, intestine, kidney, liver, lung, muscle, placenta, and prostate. Also detected in thyroid, trachea and adrenal gland. Low expression in thymus and leukocytes.

The protein resides in the cell membrane. Its function is as follows. Receptor for IL17A and IL17F, major effector cytokines of innate and adaptive immune system involved in antimicrobial host defense and maintenance of tissue integrity. Receptor for IL17A and IL17F, major effector cytokines of innate and adaptive immune system involved in antimicrobial host defense and maintenance of tissue integrity. Receptor for IL17A and IL17F homodimers as part of a heterodimeric complex with IL17RA. Receptor for the heterodimer formed by IL17A and IL17B as part of a heterodimeric complex with IL17RA. Has also been shown to be the cognate receptor for IL17F and to bind IL17A with high affinity without the need for IL17RA. Upon binding of IL17F homodimer triggers downstream activation of TRAF6 and NF-kappa-B signaling pathway. Induces transcriptional activation of IL33, a potent cytokine that stimulates group 2 innate lymphoid cells and adaptive T-helper 2 cells involved in pulmonary allergic response to fungi. Promotes sympathetic innervation of peripheral organs by coordinating the communication between gamma-delta T cells and parenchymal cells. Stimulates sympathetic innervation of thermogenic adipose tissue by driving TGFB1 expression. Binding of IL17A-IL17F to IL17RA-IL17RC heterodimeric receptor complex triggers homotypic interaction of IL17RA and IL17RC chains with TRAF3IP2 adapter through SEFIR domains. This leads to downstream TRAF6-mediated activation of NF-kappa-B and MAPkinase pathways ultimately resulting in transcriptional activation of cytokines, chemokines, antimicrobial peptides and matrix metalloproteinases, with potential strong immune inflammation. Primarily induces neutrophil activation and recruitment at infection and inflammatory sites. Stimulates the production of antimicrobial beta-defensins DEFB1, DEFB103A, and DEFB104A by mucosal epithelial cells, limiting the entry of microbes through the epithelial barriers. In terms of biological role, receptor for both IL17A and IL17F. Functionally, does not bind IL17A or IL17F. This chain is Interleukin-17 receptor C (IL17RC), found in Homo sapiens (Human).